Consider the following 419-residue polypeptide: UDP-N-acetylglucosamine 1-carboxyvinyltransferase (419 aa).

Residue 22–23 coordinates phosphoenolpyruvate; that stretch reads KN. Arg-93 is a UDP-N-acetyl-alpha-D-glucosamine binding site. The Proton donor role is filled by Cys-117. A 2-(S-cysteinyl)pyruvic acid O-phosphothioketal modification is found at Cys-117. Residues Asp-307 and Ile-329 each contribute to the UDP-N-acetyl-alpha-D-glucosamine site.

Belongs to the EPSP synthase family. MurA subfamily.

It localises to the cytoplasm. It carries out the reaction phosphoenolpyruvate + UDP-N-acetyl-alpha-D-glucosamine = UDP-N-acetyl-3-O-(1-carboxyvinyl)-alpha-D-glucosamine + phosphate. It participates in cell wall biogenesis; peptidoglycan biosynthesis. Cell wall formation. Adds enolpyruvyl to UDP-N-acetylglucosamine. The polypeptide is UDP-N-acetylglucosamine 1-carboxyvinyltransferase (Shewanella sp. (strain MR-7)).